We begin with the raw amino-acid sequence, 232 residues long: Protein TIFY 10c (232 aa).

Residues 54 to 73 form a disordered region; sequence PPAAGAGGAFRPPPTTMNLL. One can recognise a Tify domain in the interval 114 to 149; that stretch reads AGEKAQQLTIFYGGKVVVFENFPSTKVKDLLQIVST. Positions 152-177 are disordered; the sequence is GVDKNTGTAATQSLPRPAHNSLPDLP. Residues 156–165 show a composition bias toward polar residues; the sequence is NTGTAATQSL. The Jas signature appears at 177-202; sequence PIARRNSLHRFLEKRKGRMNANAPYQ. The Nuclear localization signal signature appears at 179 to 186; it reads ARRNSLHR.

The protein belongs to the TIFY/JAZ family. In terms of assembly, interacts with BHLH148. Interacts with COI1B in a coronatine-dependent manner. Coronatine is an analog of jasmonoyl isoleucine (JA-Ile). Interacts with TIFY5/JAZ2, TIFY6B/JAZ4, TIFY9/JAZ5, TIFY11A, TIFY11D/JAZ12, TIFY11G/JAZ15 and NINJA1. Ubiquitinated. Increase in jasmonoyl isoleucine (JA-Ile) levels mediates its degradation via COI1B-mediated proteasome pathway.

It localises to the nucleus. The protein localises to the cytoplasm. Its subcellular location is the cytosol. Repressor of jasmonate (JA) responses. Acts as a repressor of JA-induced resistance to the bacterial blight pathogen Xanthomonas oryzae pv. oryzae (Xoo). Regulates JA-induced accumulation of linalool at the transcriptional level of linalool synthase gene LIS. Linalool is important for resistance to bacterial blight pathogen Xoo. The chain is Protein TIFY 10c from Oryza sativa subsp. japonica (Rice).